Consider the following 323-residue polypeptide: tRNA dimethylallyltransferase (323 aa).

12 to 19 contributes to the ATP binding site; the sequence is GPTAAGKT. 14 to 19 lines the substrate pocket; sequence TAAGKT. Interaction with substrate tRNA stretches follow at residues 37 to 40 and 161 to 165; these read DSAL and QRLIR.

Belongs to the IPP transferase family. As to quaternary structure, monomer. Mg(2+) serves as cofactor.

It catalyses the reaction adenosine(37) in tRNA + dimethylallyl diphosphate = N(6)-dimethylallyladenosine(37) in tRNA + diphosphate. Functionally, catalyzes the transfer of a dimethylallyl group onto the adenine at position 37 in tRNAs that read codons beginning with uridine, leading to the formation of N6-(dimethylallyl)adenosine (i(6)A). The protein is tRNA dimethylallyltransferase of Pseudomonas putida (strain W619).